Here is a 131-residue protein sequence, read N- to C-terminus: uncharacterized protein (131 aa).

The segment at 112–131 (LTDNPGAVRKSQKSLIPPYN) is disordered.

This is an uncharacterized protein from Fowl adenovirus A serotype 1 (strain CELO / Phelps) (FAdV-1).